The chain runs to 208 residues: Putative archaetidylserine decarboxylase proenzyme (208 aa).

Ser171 serves as the catalytic Schiff-base intermediate with substrate; via pyruvic acid. Pyruvic acid (Ser); by autocatalysis is present on Ser171.

It belongs to the phosphatidylserine decarboxylase family. PSD-A subfamily. In terms of assembly, heterodimer of a large membrane-associated beta subunit and a small pyruvoyl-containing alpha subunit. The cofactor is pyruvate. Post-translationally, is synthesized initially as an inactive proenzyme. Formation of the active enzyme involves a self-maturation process in which the active site pyruvoyl group is generated from an internal serine residue via an autocatalytic post-translational modification. Two non-identical subunits are generated from the proenzyme in this reaction, and the pyruvate is formed at the N-terminus of the alpha chain, which is derived from the carboxyl end of the proenzyme. The post-translation cleavage follows an unusual pathway, termed non-hydrolytic serinolysis, in which the side chain hydroxyl group of the serine supplies its oxygen atom to form the C-terminus of the beta chain, while the remainder of the serine residue undergoes an oxidative deamination to produce ammonia and the pyruvoyl prosthetic group on the alpha chain.

Its subcellular location is the cell membrane. The enzyme catalyses archaetidylserine + H(+) = archaetidylethanolamine + CO2. Its function is as follows. Catalyzes the formation of archaetidylethanolamine (PtdEtn) from archaetidylserine (PtdSer). This Methanococcoides burtonii (strain DSM 6242 / NBRC 107633 / OCM 468 / ACE-M) protein is Putative archaetidylserine decarboxylase proenzyme.